A 53-amino-acid polypeptide reads, in one-letter code: Large ribosomal subunit protein bL33B (53 aa).

It belongs to the bacterial ribosomal protein bL33 family.

In Sorangium cellulosum (strain So ce56) (Polyangium cellulosum (strain So ce56)), this protein is Large ribosomal subunit protein bL33B.